The chain runs to 223 residues: Uracil-DNA glycosylase (223 aa).

D64 (proton acceptor) is an active-site residue.

Belongs to the uracil-DNA glycosylase (UDG) superfamily. UNG family.

Its subcellular location is the cytoplasm. It carries out the reaction Hydrolyzes single-stranded DNA or mismatched double-stranded DNA and polynucleotides, releasing free uracil.. Functionally, excises uracil residues from the DNA which can arise as a result of misincorporation of dUMP residues by DNA polymerase or due to deamination of cytosine. This chain is Uracil-DNA glycosylase, found in Desulfitobacterium hafniense (strain DSM 10664 / DCB-2).